Here is a 576-residue protein sequence, read N- to C-terminus: Glucoamylase ARB_02327-1 (576 aa).

An N-terminal signal peptide occupies residues 1–20; that stretch reads MGLASTVSLALLGLCSLARA. Position 141 (tryptophan 141) interacts with substrate. N-linked (GlcNAc...) asparagine glycans are attached at residues asparagine 168 and asparagine 192. Catalysis depends on aspartate 197, which acts as the Proton acceptor. Glutamate 200 serves as the catalytic Proton donor. 2 disulfides stabilise this stretch: cysteine 243–cysteine 470 and cysteine 285–cysteine 293. The region spanning 477 to 576 is the CBM20 domain; the sequence is GSGGDTVAVT…GSFTQNDTWR (100 aa). Residues 552-576 form a disordered region; that stretch reads TWESDPNRSITTSASGSFTQNDTWR. N-linked (GlcNAc...) asparagine glycosylation is found at asparagine 558 and asparagine 572.

The protein belongs to the glycosyl hydrolase 15 family.

Its subcellular location is the secreted. The enzyme catalyses Hydrolysis of terminal (1-&gt;4)-linked alpha-D-glucose residues successively from non-reducing ends of the chains with release of beta-D-glucose.. This Schizophyllum commune (strain H4-8 / FGSC 9210) (Split gill fungus) protein is Glucoamylase ARB_02327-1.